Here is a 316-residue protein sequence, read N- to C-terminus: MDWKLEGSTQKVESPVLQGQEGILEETGEDGLPEGFQLLQIDAEGECQEGEILATGSTAWCSKNVQRKQRHWEKIVAAKKSKRKQEKERRKANRAENPGICPQHSKRFLRALTKDKLLEAKHSGPRLCIDLSMTHYMSKKELSRLAGQIRRLYGSNKKADRPFWICLTGFTTDSPLYEECVRMNDGFSSYLLDITEEDCFSLFPLETLVYLTPDSEHALEDVDLNKVYILGGLVDESIQKKVTFQKAREYSVKTARLPIQEYMVRNQNGKNYHSEILAINQVFDILSTYLETHNWPEALKKGVSSGKGYILRNSVE.

A coiled-coil region spans residues E73 to N97. The interval A77–P98 is disordered. Positions T113–I310 constitute an SAM-dependent MTase TRM10-type domain.

This sequence belongs to the class IV-like SAM-binding methyltransferase superfamily. TRM10 family.

It carries out the reaction guanosine(9) in tRNA + S-adenosyl-L-methionine = N(1)-methylguanosine(9) in tRNA + S-adenosyl-L-homocysteine + H(+). Functionally, S-adenosyl-L-methionine-dependent guanine N(1)-methyltransferase that catalyzes the formation of N(1)-methylguanine at position 9 (m1G9) in tRNAs. Probably not able to catalyze formation of N(1)-methyladenine at position 9 (m1A9) in tRNAs. The sequence is that of tRNA methyltransferase 10 homolog B (TRMT10B) from Homo sapiens (Human).